We begin with the raw amino-acid sequence, 229 residues long: Octanoyltransferase (229 aa).

In terms of domain architecture, BPL/LPL catalytic spans 47–225; sequence PSSPEAVWIL…SLAARFHLAW (179 aa). Substrate is bound by residues 89 to 96, 156 to 158, and 169 to 171; these read RGGEVTHH, AIG, and GLA. The active-site Acyl-thioester intermediate is cysteine 187.

The protein belongs to the LipB family.

The protein localises to the cytoplasm. It carries out the reaction octanoyl-[ACP] + L-lysyl-[protein] = N(6)-octanoyl-L-lysyl-[protein] + holo-[ACP] + H(+). It functions in the pathway protein modification; protein lipoylation via endogenous pathway; protein N(6)-(lipoyl)lysine from octanoyl-[acyl-carrier-protein]: step 1/2. In terms of biological role, catalyzes the transfer of endogenously produced octanoic acid from octanoyl-acyl-carrier-protein onto the lipoyl domains of lipoate-dependent enzymes. Lipoyl-ACP can also act as a substrate although octanoyl-ACP is likely to be the physiological substrate. The protein is Octanoyltransferase of Synechococcus sp. (strain CC9902).